The sequence spans 73 residues: UPF0435 protein lin1819 (73 aa).

This sequence belongs to the UPF0435 family.

The polypeptide is UPF0435 protein lin1819 (Listeria innocua serovar 6a (strain ATCC BAA-680 / CLIP 11262)).